The primary structure comprises 288 residues: MKLAVYGKGGIGKSTTSCNISIALARRGKKVLQIGCDPKHDSTFTLTGFLIPTIIDTLQAKDYHYENVWPEDVIYQGYGGVDCVEAGGPPAGAGCGGYVVGETVKLLKELNAFYEYDIILFDVLGDVVCGGFAAPLNYADYCLIVTDNGFDALFAANRIAASVREKARTHPLRLAGLVANRTTKRDLIDKYVQVCPIPVLEVLPLLEDIRVSRVKGKTLFEMAESEPDLSFVLDYYLNIADQLLTEPEGVVPRELGDRELFSLLSDFYLNIENQTSVNKTEKLDFFLV.

ATP contacts are provided by residues 10-15 and lysine 39; that span reads GIGKST. Residue serine 14 participates in Mg(2+) binding. The [4Fe-4S] cluster site is built by cysteine 95 and cysteine 129. ATP-binding positions include 180–181 and 204–206; these read NR and PLL.

The protein belongs to the NifH/BchL/ChlL family. In terms of assembly, homodimer. Protochlorophyllide reductase is composed of three subunits; ChlL, ChlN and ChlB. The cofactor is [4Fe-4S] cluster.

Its subcellular location is the plastid. The protein localises to the chloroplast. The enzyme catalyses chlorophyllide a + oxidized 2[4Fe-4S]-[ferredoxin] + 2 ADP + 2 phosphate = protochlorophyllide a + reduced 2[4Fe-4S]-[ferredoxin] + 2 ATP + 2 H2O. The protein operates within porphyrin-containing compound metabolism; chlorophyll biosynthesis (light-independent). Functionally, component of the dark-operative protochlorophyllide reductase (DPOR) that uses Mg-ATP and reduced ferredoxin to reduce ring D of protochlorophyllide (Pchlide) to form chlorophyllide a (Chlide). This reaction is light-independent. The L component serves as a unique electron donor to the NB-component of the complex, and binds Mg-ATP. This is Light-independent protochlorophyllide reductase iron-sulfur ATP-binding protein from Stigeoclonium helveticum (Green alga).